Consider the following 434-residue polypeptide: E3 ubiquitin-protein transferase MAEA (434 aa).

The tract at residues 1 to 124 is extracellular and involved in cell to cell contact; sequence MAVQESAAQL…AAASVWKRKR (124 aa). The residue at position 28 (Thr28) is a Phosphothreonine. In terms of domain architecture, LisH spans 121 to 153; the sequence is KRKRMDRMMVEHLLRCGYYNTAVKLARQSGIED. The region spanning 159-254 is the CTLH domain; the sequence is MFLTAKEVEE…ELIRQNKRLD (96 aa). A disordered region spans residues 190-222; that stretch reads RKMKGRQSEHDAKTGRKSRVASGSPKESEDLGM. The RING-Gid-type zinc finger occupies 352 to 419; sequence CPVCSRSLNK…QDDKVVCPRT (68 aa).

Identified in the CTLH complex that contains GID4, RANBP9 and/or RANBP10, MKLN1, MAEA, RMND5A (or alternatively its paralog RMND5B), GID8, ARMC8, WDR26 and YPEL5. Within this complex, MAEA, RMND5A (or alternatively its paralog RMND5B), GID8, WDR26, and RANBP9 and/or RANBP10 form the catalytic core, while GID4, MKLN1, ARMC8 and YPEL5 have ancillary roles. Interacts with F-actin. Autoubiquitinated as component of the CTLH E3 ubiquitin-protein ligase complex (in vitro).

The protein localises to the cytoplasm. Its subcellular location is the nucleus. The protein resides in the nucleoplasm. It localises to the nucleus matrix. It is found in the cell membrane. The protein localises to the cytoskeleton. The enzyme catalyses S-ubiquitinyl-[E2 ubiquitin-conjugating enzyme]-L-cysteine + [acceptor protein]-L-lysine = [E2 ubiquitin-conjugating enzyme]-L-cysteine + N(6)-ubiquitinyl-[acceptor protein]-L-lysine.. In terms of biological role, core component of the CTLH E3 ubiquitin-protein ligase complex that selectively accepts ubiquitin from UBE2H and mediates ubiquitination and subsequent proteasomal degradation of the transcription factor HBP1. MAEA and RMND5A are both required for catalytic activity of the CTLH E3 ubiquitin-protein ligase complex. MAEA is required for normal cell proliferation. The CTLH E3 ubiquitin-protein ligase complex is not required for the degradation of enzymes involved in gluconeogenesis, such as FBP1. Plays a role in erythroblast enucleation during erythrocyte maturation and in the development of mature macrophages. Mediates the attachment of erythroid cell to mature macrophages; this MAEA-mediated contact inhibits erythroid cell apoptosis. Participates in erythroblastic island formation, which is the functional unit of definitive erythropoiesis. Associates with F-actin to regulate actin distribution in erythroblasts and macrophages. May contribute to nuclear architecture and cells division events. The protein is E3 ubiquitin-protein transferase MAEA (MAEA) of Bos taurus (Bovine).